The following is a 156-amino-acid chain: Movement protein P17 (156 aa).

The homodimerization stretch occupies residues 38–54 (AEDVEEEAIAAQEELEF). The interval 57 to 156 (DEAQARHSCL…RAAPKLIKRG (100 aa)) is RNA-binding. Phosphoserine is present on residues Ser71, Ser79, Ser137, and Ser140. Positions 106 to 156 (ASYFSSSARPLPPPPAPSLMSWTPIAKYHPSSPTSTSSKLRRAAPKLIKRG) are disordered. Positions 144 to 156 (KLRRAAPKLIKRG) are enriched in basic residues.

The protein belongs to the polerovirus movement protein family. Homodimer. Post-translationally, expressed as a nonphosphorylated 20kDa form and a phosphorylated 22kDa form. Phosphorylated by a host PKC-related kinase. Serine phosphorylation is required for plamodesma targeting.

It localises to the host cell junction. Its subcellular location is the host plasmodesma. The protein resides in the host chloroplast envelope. The protein localises to the host Golgi apparatus. It is found in the host mitochondrion outer membrane. Its function is as follows. Together with movement protein P3a, facilitates long-distance movement of virions in host. Transports viral genome to neighboring plant cells directly through plasmosdesmata, without any budding. The movement protein allows efficient cell to cell propagation, by bypassing the host cell wall barrier. Binds ssRNA. This chain is Movement protein P17, found in Solanum tuberosum (Potato).